The following is a 263-amino-acid chain: Purine nucleoside phosphorylase SAV1187 (263 aa).

Positions 79, 124, and 141 each coordinate Zn(2+).

The protein belongs to the purine nucleoside phosphorylase YfiH/LACC1 family. Homodimer. Requires Cu(2+) as cofactor. The cofactor is Zn(2+).

It catalyses the reaction adenosine + phosphate = alpha-D-ribose 1-phosphate + adenine. It carries out the reaction S-methyl-5'-thioadenosine + phosphate = 5-(methylsulfanyl)-alpha-D-ribose 1-phosphate + adenine. The enzyme catalyses inosine + phosphate = alpha-D-ribose 1-phosphate + hypoxanthine. The catalysed reaction is adenosine + H2O + H(+) = inosine + NH4(+). Purine nucleoside enzyme that catalyzes the phosphorolysis of adenosine and inosine nucleosides, yielding D-ribose 1-phosphate and the respective free bases, adenine and hypoxanthine. Also catalyzes the phosphorolysis of S-methyl-5'-thioadenosine into adenine and S-methyl-5-thio-alpha-D-ribose 1-phosphate. Also has adenosine deaminase activity. The protein is Purine nucleoside phosphorylase SAV1187 of Staphylococcus aureus (strain Mu50 / ATCC 700699).